The following is a 439-amino-acid chain: Ribosomal protein uS12 methylthiotransferase RimO (439 aa).

The MTTase N-terminal domain occupies 2-114 (SKLYLMSLGC…IDEMILKKTN (113 aa)). Residues Cys11, Cys45, Cys77, Cys146, Cys150, and Cys153 each contribute to the [4Fe-4S] cluster site. The region spanning 132–363 (TGSNSHAFIK…VDEVIEKSFE (232 aa)) is the Radical SAM core domain.

Belongs to the methylthiotransferase family. RimO subfamily. It depends on [4Fe-4S] cluster as a cofactor.

The protein localises to the cytoplasm. It carries out the reaction L-aspartate(89)-[ribosomal protein uS12]-hydrogen + (sulfur carrier)-SH + AH2 + 2 S-adenosyl-L-methionine = 3-methylsulfanyl-L-aspartate(89)-[ribosomal protein uS12]-hydrogen + (sulfur carrier)-H + 5'-deoxyadenosine + L-methionine + A + S-adenosyl-L-homocysteine + 2 H(+). Catalyzes the methylthiolation of an aspartic acid residue of ribosomal protein uS12. The chain is Ribosomal protein uS12 methylthiotransferase RimO from Campylobacter jejuni subsp. jejuni serotype O:2 (strain ATCC 700819 / NCTC 11168).